Here is a 417-residue protein sequence, read N- to C-terminus: FAD-dependent monooxygenase aptC (417 aa).

An N-terminal signal peptide occupies residues methionine 1 to alanine 18. Residues glutamate 32, alanine 43, arginine 117, aspartate 332, and glycine 345 each coordinate FAD.

This sequence belongs to the paxM FAD-dependent monooxygenase family. FAD is required as a cofactor.

It catalyses the reaction 3,6,8,9-tetrahydroxy-1-oxo-3-(2-oxopropyl)-1,2,3,4-tetrahydroanthracene-2-carboxyl-[ACP] + NADPH + O2 + H(+) = 2,3,6,8,9-pentahydroxy-1-oxo-3-(2-oxopropyl)-1,2,3,4-tetrahydroanthracene-2-carboxyl-[ACP] + NADP(+) + H2O. It functions in the pathway secondary metabolite biosynthesis. Functionally, FAD-dependent monooxygenase; part of the gene cluster that mediates the biosynthesis of asperthecin, an anthraquinone pigment. Polyketide synthase (PKS) aptA catalyzes the formation of the aromatic polyketide from acetyl coenzyme A and seven malonyl coenzyme A molecules. Polyketide is subsequently hydrolyzed by the action of the hydrolase aptB into endocrocin-9-anthrone. Endocrocin-9-anthrone is then oxidized into endocrocin by the monooxygenase aptC. Endocrocin is likely to decarboxylate spontaneously to form emodin which explains why there is no decarboxylase in the asperthecin biosynthesis cluster. Finally, aptC or another endogenous oxygenase catalyzes additional oxidation steps to form asperthecin. The chain is FAD-dependent monooxygenase aptC from Emericella nidulans (strain FGSC A4 / ATCC 38163 / CBS 112.46 / NRRL 194 / M139) (Aspergillus nidulans).